A 320-amino-acid polypeptide reads, in one-letter code: ATP-dependent 6-phosphofructokinase (320 aa).

Glycine 12 lines the ATP pocket. ADP is bound by residues 22 to 26 (RGVVR) and 55 to 60 (RYSVSD). ATP is bound by residues 73–74 (RF) and 103–106 (GDGS). Aspartate 104 contributes to the Mg(2+) binding site. 126-128 (TID) serves as a coordination point for substrate. The active-site Proton acceptor is the aspartate 128. Arginine 155 contacts ADP. Substrate is bound by residues arginine 163 and 170–172 (MGR). Residues 186-188 (GCE), lysine 212, and 214-216 (KKH) each bind ADP. Residues glutamate 223, arginine 244, and 250–253 (HIQR) contribute to the substrate site.

Belongs to the phosphofructokinase type A (PFKA) family. ATP-dependent PFK group I subfamily. Prokaryotic clade 'B1' sub-subfamily. As to quaternary structure, homotetramer. Mg(2+) is required as a cofactor.

The protein resides in the cytoplasm. It catalyses the reaction beta-D-fructose 6-phosphate + ATP = beta-D-fructose 1,6-bisphosphate + ADP + H(+). Its pathway is carbohydrate degradation; glycolysis; D-glyceraldehyde 3-phosphate and glycerone phosphate from D-glucose: step 3/4. Allosterically activated by ADP and other diphosphonucleosides, and allosterically inhibited by phosphoenolpyruvate. Functionally, catalyzes the phosphorylation of D-fructose 6-phosphate to fructose 1,6-bisphosphate by ATP, the first committing step of glycolysis. This chain is ATP-dependent 6-phosphofructokinase, found in Salmonella gallinarum (strain 287/91 / NCTC 13346).